We begin with the raw amino-acid sequence, 628 residues long: Methionine--tRNA ligase (628 aa).

Residues 9 to 19 carry the 'HIGH' region motif; that stretch reads YYVNDVPHLGH. Zn(2+)-binding residues include cysteine 124, cysteine 127, cysteine 142, and cysteine 145. The 'KMSKS' region signature appears at 294–298; it reads KMSKS. Residue lysine 297 coordinates ATP. The region spanning 527–628 is the tRNA-binding domain; it reads DFAKIEIKVA…QLVQNGSLVG (102 aa).

This sequence belongs to the class-I aminoacyl-tRNA synthetase family. MetG type 2A subfamily. In terms of assembly, homodimer. It depends on Zn(2+) as a cofactor.

Its subcellular location is the cytoplasm. The catalysed reaction is tRNA(Met) + L-methionine + ATP = L-methionyl-tRNA(Met) + AMP + diphosphate. Its function is as follows. Is required not only for elongation of protein synthesis but also for the initiation of all mRNA translation through initiator tRNA(fMet) aminoacylation. The chain is Methionine--tRNA ligase (metG) from Campylobacter jejuni subsp. jejuni serotype O:2 (strain ATCC 700819 / NCTC 11168).